The following is a 476-amino-acid chain: PRAME family member 6 (476 aa).

Residues 97–124 form an LRR 1; degenerate repeat; that stretch reads RWKLQVLDLQDVCENFWMVWSEAMARGC. One copy of the LRR 2; degenerate repeat lies at 179–203; that stretch reads HLCCKKLKILGMPFRNIRSILKMVN. One copy of the LRR 3; degenerate repeat lies at 204-230; that stretch reads LDCIQEVEVNCKWVLPILTQFTPYLGH. One copy of the LRR 4; degenerate repeat lies at 231–266; sequence MRNLQKLVLSHMDVSRYVSPEQKKEIVTQFTTQFLK. 5 LRR repeats span residues 267-292, 293-324, 325-345, 349-376, and 377-401; these read LCCLQKLSMNSVSFLEGHLDQLLSCL, KTSLKVLTITNCVLLESDLKHLSQCPSISQLK, TLDLSGIRLTNYSLVPLQILL, AATLEYLDLDDCGIIDSQVNAILPALSR, and CFELNTFSFCGNPISMATLENLLSH.

The protein belongs to the PRAME family. In terms of assembly, component of a CRL2 E3 ubiquitin-protein ligase complex, also named ECS (Elongin BC-CUL2/5-SOCS-box protein) complex, composed of CUL2, Elongin BC (ELOB and ELOC), RBX1 and substrate-specific adapter PRAMEF6.

The protein operates within protein modification; protein ubiquitination. In terms of biological role, substrate-recognition component of a Cul2-RING (CRL2) E3 ubiquitin-protein ligase complex, which mediates ubiquitination of target proteins, leading to their degradation. The CRL2(PRAMEF6) complex mediates ubiquitination and degradation of truncated MSRB1/SEPX1 selenoproteins produced by failed UGA/Sec decoding. The protein is PRAME family member 6 of Homo sapiens (Human).